We begin with the raw amino-acid sequence, 313 residues long: tRNA pseudouridine synthase B (313 aa).

Residue His-44 participates in substrate binding. The active-site Nucleophile is the Asp-49. Substrate contacts are provided by Tyr-77, Tyr-180, and Leu-201.

It belongs to the pseudouridine synthase TruB family. Type 1 subfamily.

It carries out the reaction uridine(55) in tRNA = pseudouridine(55) in tRNA. Responsible for synthesis of pseudouridine from uracil-55 in the psi GC loop of transfer RNAs. The polypeptide is tRNA pseudouridine synthase B (Hamiltonella defensa subsp. Acyrthosiphon pisum (strain 5AT)).